Here is a 160-residue protein sequence, read N- to C-terminus: Serine-protein kinase RsbW (160 aa).

Belongs to the anti-sigma-factor family.

The catalysed reaction is L-seryl-[protein] + ATP = O-phospho-L-seryl-[protein] + ADP + H(+). It carries out the reaction L-threonyl-[protein] + ATP = O-phospho-L-threonyl-[protein] + ADP + H(+). Negative regulator of sigma-B activity. Phosphorylates and inactivates its specific antagonist protein, RsbV. Upon phosphorylation of RsbV, RsbW is released and binds to sigma-B, thereby blocking its ability to form an RNA polymerase holoenzyme (E-sigma-B). This chain is Serine-protein kinase RsbW, found in Bacillus anthracis (strain A0248).